Here is a 253-residue protein sequence, read N- to C-terminus: MSESPYTSGTTHFGFRDVAAKDKQKLVGEVFTSVARNYDLMNDLMSLGIHRAWKRYFVATAQVKPGDRVLDLAGGTGDIAVLLKERVGNEGAVVLGDINAGMLSVGRDRLTNRGLVAGFDYVQCNAEALPFPDQSFDLVTISFGLRNVTDKDAALREMYRVLKVGGQARVLEFSEVTADWFKPIYDFHSFKILPKLGQLFARDADSYQYLAESIRKHPPQDSLKGMMGEAGFARCHYKNLTGGIVAIHSGYKI.

S-adenosyl-L-methionine contacts are provided by residues T76, D97, 125-126, and S142; that span reads NA.

This sequence belongs to the class I-like SAM-binding methyltransferase superfamily. MenG/UbiE family.

The catalysed reaction is a 2-demethylmenaquinol + S-adenosyl-L-methionine = a menaquinol + S-adenosyl-L-homocysteine + H(+). It carries out the reaction a 2-methoxy-6-(all-trans-polyprenyl)benzene-1,4-diol + S-adenosyl-L-methionine = a 5-methoxy-2-methyl-3-(all-trans-polyprenyl)benzene-1,4-diol + S-adenosyl-L-homocysteine + H(+). The protein operates within quinol/quinone metabolism; menaquinone biosynthesis; menaquinol from 1,4-dihydroxy-2-naphthoate: step 2/2. Its pathway is cofactor biosynthesis; ubiquinone biosynthesis. Its function is as follows. Methyltransferase required for the conversion of demethylmenaquinol (DMKH2) to menaquinol (MKH2) and the conversion of 2-polyprenyl-6-methoxy-1,4-benzoquinol (DDMQH2) to 2-polyprenyl-3-methyl-6-methoxy-1,4-benzoquinol (DMQH2). The polypeptide is Ubiquinone/menaquinone biosynthesis C-methyltransferase UbiE (Xanthomonas campestris pv. campestris (strain ATCC 33913 / DSM 3586 / NCPPB 528 / LMG 568 / P 25)).